The following is a 103-amino-acid chain: MLLTTTDVLQGREVERYLGIVTAEVVYGTNVLRDFLATLRNIIGGRTRTYEEVFENAQKKVLEELEQRAKRLGANGILGVSIHTNMSTTMILVTAAGTAVKLR.

The protein belongs to the UPF0145 family.

The sequence is that of UPF0145 protein CYB_1351 from Synechococcus sp. (strain JA-2-3B'a(2-13)) (Cyanobacteria bacterium Yellowstone B-Prime).